Here is a 302-residue protein sequence, read N- to C-terminus: 4-hydroxy-tetrahydrodipicolinate synthase (302 aa).

Residue Thr-56 coordinates pyruvate. The Proton donor/acceptor role is filled by Tyr-145. Lys-173 functions as the Schiff-base intermediate with substrate in the catalytic mechanism. Val-215 lines the pyruvate pocket.

The protein belongs to the DapA family. In terms of assembly, homotetramer; dimer of dimers.

It is found in the cytoplasm. The enzyme catalyses L-aspartate 4-semialdehyde + pyruvate = (2S,4S)-4-hydroxy-2,3,4,5-tetrahydrodipicolinate + H2O + H(+). It participates in amino-acid biosynthesis; L-lysine biosynthesis via DAP pathway; (S)-tetrahydrodipicolinate from L-aspartate: step 3/4. Its function is as follows. Catalyzes the condensation of (S)-aspartate-beta-semialdehyde [(S)-ASA] and pyruvate to 4-hydroxy-tetrahydrodipicolinate (HTPA). The protein is 4-hydroxy-tetrahydrodipicolinate synthase of Prochlorococcus marinus subsp. pastoris (strain CCMP1986 / NIES-2087 / MED4).